The chain runs to 226 residues: Imidazole glycerol phosphate synthase subunit HisH (226 aa).

A Glutamine amidotransferase type-1 domain is found at 6–214 (NIALVDYGVG…VERAASRSAA (209 aa)). Cys84 acts as the Nucleophile in catalysis. Catalysis depends on residues His189 and Glu191.

In terms of assembly, heterodimer of HisH and HisF.

Its subcellular location is the cytoplasm. It catalyses the reaction 5-[(5-phospho-1-deoxy-D-ribulos-1-ylimino)methylamino]-1-(5-phospho-beta-D-ribosyl)imidazole-4-carboxamide + L-glutamine = D-erythro-1-(imidazol-4-yl)glycerol 3-phosphate + 5-amino-1-(5-phospho-beta-D-ribosyl)imidazole-4-carboxamide + L-glutamate + H(+). The catalysed reaction is L-glutamine + H2O = L-glutamate + NH4(+). The protein operates within amino-acid biosynthesis; L-histidine biosynthesis; L-histidine from 5-phospho-alpha-D-ribose 1-diphosphate: step 5/9. IGPS catalyzes the conversion of PRFAR and glutamine to IGP, AICAR and glutamate. The HisH subunit catalyzes the hydrolysis of glutamine to glutamate and ammonia as part of the synthesis of IGP and AICAR. The resulting ammonia molecule is channeled to the active site of HisF. The polypeptide is Imidazole glycerol phosphate synthase subunit HisH (Gloeobacter violaceus (strain ATCC 29082 / PCC 7421)).